Reading from the N-terminus, the 570-residue chain is Proline--tRNA ligase (570 aa).

It belongs to the class-II aminoacyl-tRNA synthetase family. ProS type 1 subfamily. As to quaternary structure, homodimer.

The protein localises to the cytoplasm. It catalyses the reaction tRNA(Pro) + L-proline + ATP = L-prolyl-tRNA(Pro) + AMP + diphosphate. In terms of biological role, catalyzes the attachment of proline to tRNA(Pro) in a two-step reaction: proline is first activated by ATP to form Pro-AMP and then transferred to the acceptor end of tRNA(Pro). As ProRS can inadvertently accommodate and process non-cognate amino acids such as alanine and cysteine, to avoid such errors it has two additional distinct editing activities against alanine. One activity is designated as 'pretransfer' editing and involves the tRNA(Pro)-independent hydrolysis of activated Ala-AMP. The other activity is designated 'posttransfer' editing and involves deacylation of mischarged Ala-tRNA(Pro). The misacylated Cys-tRNA(Pro) is not edited by ProRS. The protein is Proline--tRNA ligase of Clostridium perfringens (strain SM101 / Type A).